A 103-amino-acid chain; its full sequence is Small ribosomal subunit protein uS10 (103 aa).

The protein belongs to the universal ribosomal protein uS10 family. As to quaternary structure, part of the 30S ribosomal subunit.

Involved in the binding of tRNA to the ribosomes. This chain is Small ribosomal subunit protein uS10, found in Psychrobacter arcticus (strain DSM 17307 / VKM B-2377 / 273-4).